We begin with the raw amino-acid sequence, 503 residues long: Trehalose-6-phosphate synthase (503 aa).

Arg22 is a binding site for D-glucose 6-phosphate. 42–43 (GG) serves as a coordination point for UDP-alpha-D-glucose. D-glucose 6-phosphate is bound by residues Tyr94 and Asp148. Residues Arg290 and Lys295 each contribute to the UDP-alpha-D-glucose site. Residue Arg328 participates in D-glucose 6-phosphate binding. Position 393–397 (393–397 (LVAKE)) interacts with UDP-alpha-D-glucose. Residues 481 to 503 (GETGDSGVTGESTPAPESDSGSF) are disordered.

This sequence belongs to the glycosyltransferase 20 family. In terms of assembly, homotetramer.

The enzyme catalyses ADP-alpha-D-glucose + D-glucose 6-phosphate = alpha,alpha-trehalose 6-phosphate + ADP + H(+). The catalysed reaction is CDP-alpha-D-glucose + D-glucose 6-phosphate = alpha,alpha-trehalose 6-phosphate + CDP + H(+). It catalyses the reaction GDP-alpha-D-glucose + D-glucose 6-phosphate = alpha,alpha-trehalose 6-phosphate + GDP + H(+). It carries out the reaction TDP-alpha-D-glucose + D-glucose 6-phosphate = 5-methyl-UDP + alpha,alpha-trehalose 6-phosphate + H(+). The enzyme catalyses D-glucose 6-phosphate + UDP-alpha-D-glucose = alpha,alpha-trehalose 6-phosphate + UDP + H(+). Its pathway is glycan biosynthesis; trehalose biosynthesis. Its activity is regulated as follows. Stimulated by the polynucleotide FII (physiological activator), and by chondroitin sulfate (CS) and heparin. Activation by the polyanion is inhibited by high salt concentration as well as by high concentrations of mononucleoside phosphates. Involved in the production of glycogen and alpha-glucan via the TreS-Pep2 branch involved in the biosynthesis of maltose-1-phosphate (M1P), and probably in the osmoprotection via the biosynthesis of trehalose. Catalyzes the transfer of glucose from UDP-glucose (UDP-Glc) to glucose-6-phosphate (Glc-6-P) to form trehalose-6-phosphate. ADP-Glc, CDP-Glc, GDP-Glc and TDP-Glc are also glucosyl donors, however, when the pyrimidine sugar nucleotides (CDP-Glc, TDP-Glc and UDP-Glc) are used as substrates, there is an absolute requirement for a high molecular weight polyanion for activity. In Mycolicibacterium smegmatis (strain ATCC 700084 / mc(2)155) (Mycobacterium smegmatis), this protein is Trehalose-6-phosphate synthase.